Here is a 499-residue protein sequence, read N- to C-terminus: Glutamyl-tRNA(Gln) amidotransferase subunit A (499 aa).

Active-site charge relay system residues include lysine 79 and serine 154. The active-site Acyl-ester intermediate is the serine 178.

The protein belongs to the amidase family. GatA subfamily. In terms of assembly, heterotrimer of A, B and C subunits.

It carries out the reaction L-glutamyl-tRNA(Gln) + L-glutamine + ATP + H2O = L-glutaminyl-tRNA(Gln) + L-glutamate + ADP + phosphate + H(+). In terms of biological role, allows the formation of correctly charged Gln-tRNA(Gln) through the transamidation of misacylated Glu-tRNA(Gln) in organisms which lack glutaminyl-tRNA synthetase. The reaction takes place in the presence of glutamine and ATP through an activated gamma-phospho-Glu-tRNA(Gln). This Psychrobacter sp. (strain PRwf-1) protein is Glutamyl-tRNA(Gln) amidotransferase subunit A.